A 204-amino-acid chain; its full sequence is NADH-quinone oxidoreductase subunit C (204 aa).

This sequence belongs to the complex I 30 kDa subunit family. As to quaternary structure, NDH-1 is composed of 14 different subunits. Subunits NuoB, C, D, E, F, and G constitute the peripheral sector of the complex.

It localises to the cell inner membrane. It carries out the reaction a quinone + NADH + 5 H(+)(in) = a quinol + NAD(+) + 4 H(+)(out). Its function is as follows. NDH-1 shuttles electrons from NADH, via FMN and iron-sulfur (Fe-S) centers, to quinones in the respiratory chain. The immediate electron acceptor for the enzyme in this species is believed to be ubiquinone. Couples the redox reaction to proton translocation (for every two electrons transferred, four hydrogen ions are translocated across the cytoplasmic membrane), and thus conserves the redox energy in a proton gradient. The chain is NADH-quinone oxidoreductase subunit C from Vesicomyosocius okutanii subsp. Calyptogena okutanii (strain HA).